The following is a 246-amino-acid chain: Aquaporin AqpM (246 aa).

Topologically, residues 1 to 11 (MVSLTKRCIAE) are cytoplasmic. Residues 12-32 (FIGTFFLVFFGAGAAAITLMI) form a helical membrane-spanning segment. At 33 to 45 (ASGGTAPNPFNIG) the chain is on the extracellular side. A helical membrane pass occupies residues 46-66 (IGLLGGLGDWVAIGLAFGFAI). Residues 67-69 (AAS) are Cytoplasmic-facing. A helical membrane pass occupies residues 70-90 (IYALGNISGCHINPAVTIGLW). The NPA 1 motif lies at 82 to 84 (NPA). Residues 91-103 (SVKKFPGRDVVPY) lie on the Extracellular side of the membrane. The helical transmembrane segment at 104-124 (IIAQLLGAAFASFIFLQCAGI) threads the bilayer. The Cytoplasmic segment spans residues 125–145 (TAATIGGLGATAPFPGIGYWQ). A helical transmembrane segment spans residues 146–166 (AMLAETVGTFLLMITIMGIAV). Topologically, residues 167-172 (DERAPK) are extracellular. Residues 173 to 193 (GFAGIIIGLTVAGIITTIGNI) form a helical membrane-spanning segment. Over 194–217 (TGSSLNPARTFGPYLNDMVFAGTN) the chain is Cytoplasmic. Positions 199–201 (NPA) match the NPA 2 motif. The helical transmembrane segment at 218–238 (LWNYFPIYVIGPVVGAVLAAL) threads the bilayer. Topologically, residues 239–246 (TYQYLTSE) are extracellular.

This sequence belongs to the MIP/aquaporin (TC 1.A.8) family. Homotetramer.

Its subcellular location is the cell membrane. In terms of biological role, channel that permits osmotically driven movement of water in both directions. It mediates rapid entry or exit of water in response to abrupt changes in osmolarity. Also exhibits a transient but reproducible increase in the initial glycerol flux. The sequence is that of Aquaporin AqpM (aqpM) from Methanothermobacter thermautotrophicus (strain ATCC 29096 / DSM 1053 / JCM 10044 / NBRC 100330 / Delta H) (Methanobacterium thermoautotrophicum).